The chain runs to 303 residues: Albumin b-32 (303 aa).

Residues 112–137 (ATPTSSATTPGGSASAAGTRTSSATR) show a composition bias toward low complexity. Residues 112–175 (ATPTSSATTP…GGGGADADAD (64 aa)) form a disordered region. The span at 146 to 156 (ARDDQGRQRPG) shows a compositional bias: basic and acidic residues.

The protein belongs to the ribosome-inactivating protein family. Type 1 RIP subfamily. Monomer. Endosperm.

It is found in the cytoplasm. The enzyme catalyses Endohydrolysis of the N-glycosidic bond at one specific adenosine on the 28S rRNA.. Its function is as follows. A possible regulatory factor for the synthesis of zeins, the major group of storage proteins. The sequence is that of Albumin b-32 (O6) from Zea mays (Maize).